The chain runs to 197 residues: Chalcone--flavanone isomerase 2 (197 aa).

Residues Thr23, Asn88, and Thr165 each contribute to the substrate site.

The protein belongs to the chalcone isomerase family.

The catalysed reaction is a chalcone = a flavanone.. It participates in secondary metabolite biosynthesis; flavonoid biosynthesis. Catalyzes the intramolecular cyclization of bicyclic chalcones into tricyclic (S)-flavanones. Responsible for the isomerization of 4,2',4',6'-tetrahydroxychalcone (also termed chalcone) into naringenin. This chain is Chalcone--flavanone isomerase 2 (CHI2), found in Medicago sativa (Alfalfa).